The sequence spans 58 residues: MPSSKKKKETVPLASMAGLIRYYEEENEKIKISPKLLIIISIIMVAGVIVASILIPPP.

The Cytoplasmic portion of the chain corresponds to 1-33 (MPSSKKKKETVPLASMAGLIRYYEEENEKIKIS). The chain crosses the membrane as a helical span at residues 34-53 (PKLLIIISIIMVAGVIVASI). Topologically, residues 54–58 (LIPPP) are extracellular.

Belongs to the SEC61-beta family. In terms of assembly, component of the protein translocase complex. Heterotrimer consisting of alpha (SecY), beta (SecG) and gamma (SecE) subunits. Can form oligomers of the heterotrimer.

The protein resides in the cell membrane. In terms of biological role, involved in protein export. The function of the beta subunit is unknown, but it may be involved in stabilization of the trimeric complex. The protein is Preprotein translocase subunit SecG (secG) of Sulfurisphaera tokodaii (strain DSM 16993 / JCM 10545 / NBRC 100140 / 7) (Sulfolobus tokodaii).